The chain runs to 55 residues: Hirustasin (55 aa).

Intrachain disulfides connect Cys6–Cys17, Cys11–Cys22, Cys24–Cys44, Cys29–Cys48, and Cys33–Cys50. The Antistasin-like domain occupies 24 to 50 (CNEVHCRIRCKYGLKKDENGCEYPCSC).

This sequence belongs to the protease inhibitor I15 (antistasin) family.

It localises to the secreted. Acts as an inhibitor of tissue kallikrein, trypsin, chymotrypsin and neutrophil cathepsin G. This is Hirustasin from Hirudo medicinalis (Medicinal leech).